The primary structure comprises 332 residues: Fructose-bisphosphate aldolase (332 aa).

Serine 56 serves as a coordination point for D-glyceraldehyde 3-phosphate. Residue aspartate 93 is the Proton donor of the active site. Residues histidine 94, aspartate 115, glutamate 147, and histidine 191 each contribute to the Zn(2+) site. Glycine 192 serves as a coordination point for dihydroxyacetone phosphate. Histidine 234 provides a ligand contact to Zn(2+). Dihydroxyacetone phosphate contacts are provided by residues 235 to 237 and 277 to 280; these read GAS and NIDS.

Belongs to the class II fructose-bisphosphate aldolase family. In terms of assembly, homodimer. The cofactor is Zn(2+).

The enzyme catalyses beta-D-fructose 1,6-bisphosphate = D-glyceraldehyde 3-phosphate + dihydroxyacetone phosphate. Its pathway is carbohydrate degradation; glycolysis; D-glyceraldehyde 3-phosphate and glycerone phosphate from D-glucose: step 4/4. Its function is as follows. Catalyzes the aldol condensation of dihydroxyacetone phosphate (DHAP or glycerone-phosphate) with glyceraldehyde 3-phosphate (G3P) to form fructose 1,6-bisphosphate (FBP) in gluconeogenesis and the reverse reaction in glycolysis. The polypeptide is Fructose-bisphosphate aldolase (fba) (Treponema pallidum (strain Nichols)).